Reading from the N-terminus, the 353-residue chain is Ribosomal RNA small subunit methyltransferase (353 aa).

Residues 1–10 show a composition bias toward basic residues; the sequence is MAGGKIRKEK. The tract at residues 1–23 is disordered; it reads MAGGKIRKEKPKASNRAPSNHYQ. S-adenosyl-L-methionine-binding residues include histidine 35, leucine 37, glycine 62, glutamate 83, aspartate 111, and asparagine 126. The tract at residues 270–313 is disordered; sequence ALNTTSMDLGDQSMGMEDDDNEMDDDDMEMDEGEGDGGETSEFK. Acidic residues predominate over residues 285–308; it reads MEDDDNEMDDDDMEMDEGEGDGGE.

This sequence belongs to the class I-like SAM-binding methyltransferase superfamily. rRNA adenine N(6)-methyltransferase family. As to expression, expressed in rapidly dividing tissues, including root meristems and lateral root primordia, developing cotyledons and leaves, petals, anther, pollen grains and silique abscission zone.

The protein resides in the nucleus. The protein localises to the nucleolus. The catalysed reaction is adenosine(1785)/adenosine(1786) in 18S rRNA + 4 S-adenosyl-L-methionine = N(6)-dimethyladenosine(1785)/N(6)-dimethyladenosine(1786) in 18S rRNA + 4 S-adenosyl-L-homocysteine + 4 H(+). N6-adenine methyltransferase which modifies the AA dinucleotide at the plant nuclear 18S rRNA nucleotides A1785 and A1786. Required for generating appropriate patterns of gene expression during root development, including the cell-specific expression of transcriptional regulators involved in root hair and non-hair cells patterning. This is Ribosomal RNA small subunit methyltransferase from Arabidopsis thaliana (Mouse-ear cress).